The following is a 445-amino-acid chain: Phosphoglucosamine mutase (445 aa).

Serine 100 functions as the Phosphoserine intermediate in the catalytic mechanism. Positions 100, 240, 242, and 244 each coordinate Mg(2+). Serine 100 bears the Phosphoserine mark.

The protein belongs to the phosphohexose mutase family. The cofactor is Mg(2+). In terms of processing, activated by phosphorylation.

The enzyme catalyses alpha-D-glucosamine 1-phosphate = D-glucosamine 6-phosphate. Functionally, catalyzes the conversion of glucosamine-6-phosphate to glucosamine-1-phosphate. This chain is Phosphoglucosamine mutase, found in Pelotomaculum thermopropionicum (strain DSM 13744 / JCM 10971 / SI).